Consider the following 450-residue polypeptide: 3-phosphoshikimate 1-carboxyvinyltransferase (450 aa).

Residues Lys23, Ser24, and Arg28 each coordinate 3-phosphoshikimate. Lys23 is a binding site for phosphoenolpyruvate. Positions 96 and 124 each coordinate phosphoenolpyruvate. Ser167, Ser168, Gln169, Ser196, Glu311, and His340 together coordinate 3-phosphoshikimate. Residue Gln169 participates in phosphoenolpyruvate binding. The active-site Proton acceptor is Glu311. Phosphoenolpyruvate contacts are provided by Arg344, Arg385, and Lys410. The interval 426 to 450 is disordered; the sequence is GQGWGYPQPRSGQRARRATGQGSGG.

It belongs to the EPSP synthase family. Monomer.

Its subcellular location is the cytoplasm. It carries out the reaction 3-phosphoshikimate + phosphoenolpyruvate = 5-O-(1-carboxyvinyl)-3-phosphoshikimate + phosphate. It participates in metabolic intermediate biosynthesis; chorismate biosynthesis; chorismate from D-erythrose 4-phosphate and phosphoenolpyruvate: step 6/7. Its function is as follows. Catalyzes the transfer of the enolpyruvyl moiety of phosphoenolpyruvate (PEP) to the 5-hydroxyl of shikimate-3-phosphate (S3P) to produce enolpyruvyl shikimate-3-phosphate and inorganic phosphate. The chain is 3-phosphoshikimate 1-carboxyvinyltransferase from Mycobacterium tuberculosis (strain ATCC 25177 / H37Ra).